The chain runs to 112 residues: Photosystem II reaction center Psb28 protein (112 aa).

Belongs to the Psb28 family. Part of the photosystem II complex.

The protein localises to the cellular thylakoid membrane. This chain is Photosystem II reaction center Psb28 protein, found in Synechocystis sp. (strain ATCC 27184 / PCC 6803 / Kazusa).